A 201-amino-acid polypeptide reads, in one-letter code: dITP/XTP pyrophosphatase (201 aa).

Thr8–Lys13 contacts substrate. Glu41 and Asp73 together coordinate Mg(2+). Asp73 acts as the Proton acceptor in catalysis. Residues Ser74, Phe154–Asp157, Lys177, and His182–Arg183 contribute to the substrate site.

It belongs to the HAM1 NTPase family. In terms of assembly, homodimer. The cofactor is Mg(2+).

It catalyses the reaction XTP + H2O = XMP + diphosphate + H(+). It carries out the reaction dITP + H2O = dIMP + diphosphate + H(+). The enzyme catalyses ITP + H2O = IMP + diphosphate + H(+). Functionally, pyrophosphatase that catalyzes the hydrolysis of nucleoside triphosphates to their monophosphate derivatives, with a high preference for the non-canonical purine nucleotides XTP (xanthosine triphosphate), dITP (deoxyinosine triphosphate) and ITP. Seems to function as a house-cleaning enzyme that removes non-canonical purine nucleotides from the nucleotide pool, thus preventing their incorporation into DNA/RNA and avoiding chromosomal lesions. This chain is dITP/XTP pyrophosphatase, found in Clostridium tetani (strain Massachusetts / E88).